Reading from the N-terminus, the 187-residue chain is NADH-quinone oxidoreductase subunit B (187 aa).

The [4Fe-4S] cluster site is built by Cys55, Cys56, Cys121, and Cys150.

Belongs to the complex I 20 kDa subunit family. As to quaternary structure, NDH-1 is composed of 14 different subunits. Subunits NuoB, C, D, E, F, and G constitute the peripheral sector of the complex. The cofactor is [4Fe-4S] cluster.

Its subcellular location is the cell inner membrane. It catalyses the reaction a quinone + NADH + 5 H(+)(in) = a quinol + NAD(+) + 4 H(+)(out). Its function is as follows. NDH-1 shuttles electrons from NADH, via FMN and iron-sulfur (Fe-S) centers, to quinones in the respiratory chain. The immediate electron acceptor for the enzyme in this species is believed to be ubiquinone. Couples the redox reaction to proton translocation (for every two electrons transferred, four hydrogen ions are translocated across the cytoplasmic membrane), and thus conserves the redox energy in a proton gradient. In Bdellovibrio bacteriovorus (strain ATCC 15356 / DSM 50701 / NCIMB 9529 / HD100), this protein is NADH-quinone oxidoreductase subunit B.